Consider the following 351-residue polypeptide: L-threonine 3-dehydrogenase (351 aa).

Residue Cys-39 participates in Zn(2+) binding. Catalysis depends on charge relay system residues Thr-41 and His-44. Zn(2+)-binding residues include His-64, Glu-65, Cys-94, Cys-97, Cys-100, and Cys-108. Residues Ile-176, Asp-196, Arg-201, 271-273 (LGI), and 295-296 (IY) each bind NAD(+).

It belongs to the zinc-containing alcohol dehydrogenase family. Homotetramer. Zn(2+) is required as a cofactor.

Its subcellular location is the cytoplasm. It carries out the reaction L-threonine + NAD(+) = (2S)-2-amino-3-oxobutanoate + NADH + H(+). Its pathway is amino-acid degradation; L-threonine degradation via oxydo-reductase pathway; glycine from L-threonine: step 1/2. Catalyzes the NAD(+)-dependent oxidation of L-threonine to 2-amino-3-ketobutyrate. This chain is L-threonine 3-dehydrogenase, found in Francisella philomiragia subsp. philomiragia (strain ATCC 25017 / CCUG 19701 / FSC 153 / O#319-036).